The chain runs to 379 residues: Succinyl-diaminopimelate desuccinylase (379 aa).

Zn(2+) is bound at residue His68. Asp70 is a catalytic residue. Asp101 lines the Zn(2+) pocket. Glu134 (proton acceptor) is an active-site residue. Zn(2+) is bound by residues Glu135, Glu163, and His352.

This sequence belongs to the peptidase M20A family. DapE subfamily. Homodimer. Zn(2+) serves as cofactor. It depends on Co(2+) as a cofactor.

It carries out the reaction N-succinyl-(2S,6S)-2,6-diaminopimelate + H2O = (2S,6S)-2,6-diaminopimelate + succinate. The protein operates within amino-acid biosynthesis; L-lysine biosynthesis via DAP pathway; LL-2,6-diaminopimelate from (S)-tetrahydrodipicolinate (succinylase route): step 3/3. In terms of biological role, catalyzes the hydrolysis of N-succinyl-L,L-diaminopimelic acid (SDAP), forming succinate and LL-2,6-diaminopimelate (DAP), an intermediate involved in the bacterial biosynthesis of lysine and meso-diaminopimelic acid, an essential component of bacterial cell walls. In Dinoroseobacter shibae (strain DSM 16493 / NCIMB 14021 / DFL 12), this protein is Succinyl-diaminopimelate desuccinylase.